Reading from the N-terminus, the 343-residue chain is Galactoside alpha-(1,2)-fucosyltransferase 2 (343 aa).

Topologically, residues 1–14 (MLVVQMPFSFPMAH) are cytoplasmic. The chain crosses the membrane as a helical; Signal-anchor for type II membrane protein span at residues 15–28 (FILFVFTVSTIFHV). Residues 29 to 343 (QQRLAKIQAM…AADLSPLLKH (315 aa)) lie on the Lumenal side of the membrane. Residues asparagine 188, asparagine 282, and asparagine 308 are each glycosylated (N-linked (GlcNAc...) asparagine).

Belongs to the glycosyltransferase 11 family.

Its subcellular location is the golgi apparatus. It localises to the golgi stack membrane. The catalysed reaction is a beta-D-galactosyl-(1-&gt;3)-N-acetyl-beta-D-glucosaminyl derivative + GDP-beta-L-fucose = an alpha-L-Fuc-(1-&gt;2)-beta-D-Gal-(1-&gt;3)-beta-D-GlcNAc derivative + GDP + H(+). It catalyses the reaction a beta-D-galactosyl-(1-&gt;4)-N-acetyl-beta-D-glucosaminyl derivative + GDP-beta-L-fucose = an alpha-L-Fuc-(1-&gt;2)-beta-D-Gal-(1-&gt;4)-beta-D-GlcNAc derivative + GDP + H(+). The enzyme catalyses a neolactoside nLc4Cer + GDP-beta-L-fucose = a neolactoside IV(2)-alpha-Fuc-nLc4Cer + GDP + H(+). It carries out the reaction a neolactoside nLc4Cer(d18:1(4E)) + GDP-beta-L-fucose = a neolactoside IV(2)-alpha-Fuc-nLc4Cer(d18:1(4E)) + GDP + H(+). The catalysed reaction is a ganglioside GM1 + GDP-beta-L-fucose = a ganglioside Fuc-GM1 + GDP + H(+). It catalyses the reaction a ganglioside GA1 + GDP-beta-L-fucose = a ganglioside Fuc-GA1 + GDP + H(+). The enzyme catalyses Lc4Cer + GDP-beta-L-fucose = alpha-L-fucosyl-(1-&gt;2)-beta-D-galactosyl-(1-&gt;3)-N-acetyl-beta-D-glucosaminyl-(1-&gt;3)-beta-D-galactosyl-(1-&gt;4)-beta-D-glucosyl-(1&lt;-&gt;1')-ceramide + GDP + H(+). It carries out the reaction a beta-D-Gal-(1-&gt;3)-beta-D-GlcNAc-(1-&gt;3)-beta-D-Gal-(1-&gt;4)-beta-D-Glc-(1&lt;-&gt;1')-Cer(d18:1(4E)) + GDP-beta-L-fucose = alpha-L-fucosyl-(1-&gt;2)- beta-D-galactosyl-(1-&gt;3)-N-acetyl-beta-D-glucosaminyl-(1-&gt;3)-beta-D-galactosyl-(1-&gt;4)-beta-D-glucosyl-(1&lt;-&gt;1')-N-acylsphing-4-enine + GDP + H(+). The catalysed reaction is a ganglioside GD1b + GDP-beta-L-fucose = a ganglioside Fuc-GD1b + GDP + H(+). It catalyses the reaction a ganglioside GM1 (d18:1(4E)) + GDP-beta-L-fucose = a ganglioside Fuc-GM1 (d18:1(4E)) + GDP + H(+). The enzyme catalyses a globoside GalGb4Cer (d18:1(4E)) + GDP-beta-L-fucose = a globoside Globo-H (d18:1(4E)) + GDP + H(+). It carries out the reaction a lactoside III(4)-a-Fuc-Lc4Cer + GDP-beta-L-fucose = a lactoside IV(2),III(4)-a-[Fuc]2-Lc4Cer + GDP + H(+). The catalysed reaction is beta-D-galactosyl-(1-&gt;3)-N-acetyl-D-galactosamine + GDP-beta-L-fucose = alpha-L-fucosyl-(1-&gt;2)-beta-D-galactosyl-(1-&gt;3)-N-acetyl-D-galactosamine + GDP + H(+). It functions in the pathway protein modification; protein glycosylation. Functionally, catalyzes the transfer of L-fucose, from a guanosine diphosphate-beta-L-fucose, to the terminal galactose on both O- and N-linked glycans chains of cell surface glycoproteins and glycolipids and the resulting epitope regulates several processes such as cell-cell interaction including host-microbe interaction, cell surface expression and cell proliferation. Preferentially fucosylates gangliosides GA1 and GM1 in the antrum, cecum and colon and in the female reproductive organs. Fucosylated host glycoproteins or glycolipids mediate interaction with intestinal microbiota influencing its composition. Creates a soluble precursor oligosaccharide FuC-alpha ((1,2)Galbeta-) called the H antigen which is an essential substrate for the final step in the soluble ABO blood group antigen synthesis pathway. The sequence is that of Galactoside alpha-(1,2)-fucosyltransferase 2 from Gorilla gorilla gorilla (Western lowland gorilla).